The following is a 269-amino-acid chain: 3-methyl-2-oxobutanoate hydroxymethyltransferase (269 aa).

Positions 42 and 81 each coordinate Mg(2+). Residues 42 to 43, Asp81, and Lys111 each bind 3-methyl-2-oxobutanoate; that span reads DS. Residue Glu113 coordinates Mg(2+). Glu179 (proton acceptor) is an active-site residue. Residues 250–269 are disordered; that stretch reads SGEFPRESHSHTEDELDDLY. A compositionally biased stretch (basic and acidic residues) spans 252 to 262; it reads EFPRESHSHTE.

Belongs to the PanB family. In terms of assembly, homodecamer; pentamer of dimers. Mg(2+) serves as cofactor.

It is found in the cytoplasm. It carries out the reaction 3-methyl-2-oxobutanoate + (6R)-5,10-methylene-5,6,7,8-tetrahydrofolate + H2O = 2-dehydropantoate + (6S)-5,6,7,8-tetrahydrofolate. The protein operates within cofactor biosynthesis; coenzyme A biosynthesis. Functionally, catalyzes the reversible reaction in which hydroxymethyl group from 5,10-methylenetetrahydrofolate is transferred onto alpha-ketoisovalerate to form ketopantoate. The sequence is that of 3-methyl-2-oxobutanoate hydroxymethyltransferase from Haloarcula marismortui (strain ATCC 43049 / DSM 3752 / JCM 8966 / VKM B-1809) (Halobacterium marismortui).